A 703-amino-acid polypeptide reads, in one-letter code: Elongation factor G (703 aa).

Positions 7–287 constitute a tr-type G domain; that stretch reads KFTRNIGIAA…AVMRYLPSPA (281 aa). GTP-binding positions include 16–23, 84–88, and 138–141; these read AHIDAGKT, DTPGH, and NKMD.

This sequence belongs to the TRAFAC class translation factor GTPase superfamily. Classic translation factor GTPase family. EF-G/EF-2 subfamily.

The protein resides in the cytoplasm. Functionally, catalyzes the GTP-dependent ribosomal translocation step during translation elongation. During this step, the ribosome changes from the pre-translocational (PRE) to the post-translocational (POST) state as the newly formed A-site-bound peptidyl-tRNA and P-site-bound deacylated tRNA move to the P and E sites, respectively. Catalyzes the coordinated movement of the two tRNA molecules, the mRNA and conformational changes in the ribosome. The chain is Elongation factor G from Christiangramia forsetii (strain DSM 17595 / CGMCC 1.15422 / KT0803) (Gramella forsetii).